The sequence spans 65 residues: Cold shock-like protein CspB (65 aa).

Residues 3–62 (GKVKWFNNEKGFGFIEMEGSEDVFVHFSAIQSDGYKALEEGQEVSFDITEGNRGPQAANV) enclose the CSD domain.

As to quaternary structure, homodimer.

It is found in the cytoplasm. In Bacillus cereus, this protein is Cold shock-like protein CspB (cspB).